A 162-amino-acid polypeptide reads, in one-letter code: Large ribosomal subunit protein uL10 (162 aa).

It belongs to the universal ribosomal protein uL10 family. As to quaternary structure, part of the ribosomal stalk of the 50S ribosomal subunit. The N-terminus interacts with L11 and the large rRNA to form the base of the stalk. The C-terminus forms an elongated spine to which L12 dimers bind in a sequential fashion forming a multimeric L10(L12)X complex.

In terms of biological role, forms part of the ribosomal stalk, playing a central role in the interaction of the ribosome with GTP-bound translation factors. The protein is Large ribosomal subunit protein uL10 of Vibrio vulnificus (strain CMCP6).